The chain runs to 492 residues: Citrate synthase, peroxisomal (492 aa).

Residues His307, His346, and Asp402 contribute to the active site. Residues 469–492 form a disordered region; sequence PAKVRSQDSYSSATTKRYSKVTSH. Residues 475–484 are compositionally biased toward polar residues; that stretch reads QDSYSSATTK.

Belongs to the citrate synthase family.

The protein localises to the peroxisome. The catalysed reaction is oxaloacetate + acetyl-CoA + H2O = citrate + CoA + H(+). It participates in carbohydrate metabolism; tricarboxylic acid cycle; isocitrate from oxaloacetate: step 1/2. Functionally, peroxisomal protein involved in the cellular biosynthesis of citrate, and required primarily for cell growth and modulation of multicellular development. This chain is Citrate synthase, peroxisomal (cshA), found in Dictyostelium discoideum (Social amoeba).